The sequence spans 534 residues: (E)-beta-farnesene synthase (534 aa).

Mg(2+) contacts are provided by Asp287, Asp291, Asn431, Ser435, and Glu439. The short motif at Asp287–Asp291 is the DDXXD motif element.

It belongs to the terpene synthase family. Requires Mg(2+) as cofactor. Co(2+) is required as a cofactor. The cofactor is Mn(2+).

The protein localises to the cytoplasm. It catalyses the reaction (2E,6E)-farnesyl diphosphate = (E)-beta-farnesene + diphosphate. It participates in secondary metabolite biosynthesis; terpenoid biosynthesis. Its function is as follows. Sesquiterpene cyclase catalyzing the production of beta-farnesene and alpha-bergamotene in equal amounts from farnesyl diphosphate. Involved in indirect defense by producing volatile signals attracting natural enemies of herbivores. This Zea mays subsp. mexicana (Mexican teosinte) protein is (E)-beta-farnesene synthase.